Reading from the N-terminus, the 809-residue chain is 3',5'-cyclic-AMP phosphodiesterase 4D (809 aa).

The segment at 1 to 107 (MEAEGSSAPA…SGATGRVRHR (107 aa)) is disordered. 3 positions are modified to phosphoserine: H54, P59, and P63. Positions 58–89 (PPPPPPSPQPQPQCPLQPPPPPPLPPPPPPPG) are enriched in pro residues. Positions 90-102 (AARGRYASSGATG) are enriched in low complexity. 5 positions are modified to phosphoserine: S142, S299, S301, S348, and S375. Residues 343 to 364 (EVEIPSPTQKEKEKKKRPMSQI) are disordered. One can recognise a PDEase domain in the interval 386–715 (VKTEQEDVLA…EWYQSTIPQS (330 aa)). K387 is covalently cross-linked (Glycyl lysine isopeptide (Lys-Gly) (interchain with G-Cter in SUMO)). The active-site Proton donor is H462. H462 is a binding site for 3',5'-cyclic AMP. H462 contacts AMP. Residues H466, H502, D503, and D620 each coordinate Zn(2+). Residues D503, D620, N623, Q671, and F674 each contribute to the AMP site. D503 provides a ligand contact to Mg(2+). D503 is a binding site for Mn(2+). The 3',5'-cyclic AMP site is built by Q671 and F674. Disordered stretches follow at residues 710-729 (STIP…GRQG) and 739-809 (TLEE…SPDT). The segment covering 762 to 773 (CSDSKTLCTQDS) has biased composition (polar residues). Residues 779-796 (PLDEQVEEEAVGEEEESQ) show a composition bias toward acidic residues.

The protein belongs to the cyclic nucleotide phosphodiesterase family. PDE4 subfamily. As to quaternary structure, homodimer for the long isoforms. Isoforms with truncated N-termini are monomeric. Isoform 3 is part of a ternary complex containing PRKAR2A, PRKAR2B and AKAP9. Interacts with PDE4DIP. Identified in a complex composed of RYR1, PDE4D, PKA, FKBP1A and protein phosphatase 1 (PP1). Isoform 5, isoform N3 and isoform 12 bind RACK1 via their unique N-terminus. Binds ARRB2. Interacts (via N-terminal region) with SHANK2 (via proline-rich region); the interaction is increased in a PKA-dependent manner. Requires Zn(2+) as cofactor. The cofactor is Mg(2+). Mn(2+) serves as cofactor. Long isoforms that share a conserved PKA phosphorylation site in the N-terminus are activated by PKA through phosphorylation. Isoform 3 and isoform 7 are activated by phosphorylation (in vitro), but not isoform 6. Isoform N3 and isoform 12 are phosphorylated on Ser-49, Ser-51, Ser-55 and Ser-59. Post-translationally, sumoylation of long isoforms by PIAS4 augments their activation by PKA phosphorylation and represses their inhibition by ERK phosphorylation. In terms of tissue distribution, expressed in colonic epithelial cells (at protein level). Widespread; most abundant in skeletal muscle. As to expression, detected in brain. Detected in brain, placenta, lung and kidney. In terms of tissue distribution, detected in heart and skeletal muscle.

It localises to the apical cell membrane. The protein resides in the cytoplasm. The protein localises to the membrane. Its subcellular location is the cytoskeleton. It is found in the microtubule organizing center. It localises to the centrosome. The catalysed reaction is 3',5'-cyclic AMP + H2O = AMP + H(+). The protein operates within purine metabolism; 3',5'-cyclic AMP degradation; AMP from 3',5'-cyclic AMP: step 1/1. Its activity is regulated as follows. Inhibited by rolipram. Activated by phosphatidic acid. In terms of biological role, hydrolyzes the second messenger cAMP, which is a key regulator of many important physiological processes. In Homo sapiens (Human), this protein is 3',5'-cyclic-AMP phosphodiesterase 4D.